We begin with the raw amino-acid sequence, 1264 residues long: ATP-dependent helicase/nuclease subunit A (1264 aa).

In terms of domain architecture, UvrD-like helicase ATP-binding spans 12-482; sequence EQFTDSQWQA…IILAENFRSR (471 aa). 33-40 provides a ligand contact to ATP; it reads ASAGSGKT. In terms of domain architecture, UvrD-like helicase C-terminal spans 520-808; the sequence is SEAADYSTEL…RVMTIHASKG (289 aa).

The protein belongs to the helicase family. AddA subfamily. In terms of assembly, heterodimer of AddA and AddB/RexB. Mg(2+) serves as cofactor.

The catalysed reaction is Couples ATP hydrolysis with the unwinding of duplex DNA by translocating in the 3'-5' direction.. It carries out the reaction ATP + H2O = ADP + phosphate + H(+). In terms of biological role, the heterodimer acts as both an ATP-dependent DNA helicase and an ATP-dependent, dual-direction single-stranded exonuclease. Recognizes the chi site generating a DNA molecule suitable for the initiation of homologous recombination. The AddA nuclease domain is required for chi fragment generation; this subunit has the helicase and 3' -&gt; 5' nuclease activities. The sequence is that of ATP-dependent helicase/nuclease subunit A from Enterococcus faecalis (strain ATCC 700802 / V583).